We begin with the raw amino-acid sequence, 351 residues long: Anthranilate phosphoribosyltransferase (351 aa).

5-phospho-alpha-D-ribose 1-diphosphate is bound by residues Gly80, 83 to 84, Thr88, 90 to 93, 108 to 116, and Ser120; these read GD, NIST, and KHGNRSITS. Residue Gly80 coordinates anthranilate. Ser92 provides a ligand contact to Mg(2+). Position 111 (Asn111) interacts with anthranilate. Arg166 contributes to the anthranilate binding site. Asp229 and Glu230 together coordinate Mg(2+).

Belongs to the anthranilate phosphoribosyltransferase family. As to quaternary structure, homodimer. Mg(2+) serves as cofactor.

It carries out the reaction N-(5-phospho-beta-D-ribosyl)anthranilate + diphosphate = 5-phospho-alpha-D-ribose 1-diphosphate + anthranilate. It participates in amino-acid biosynthesis; L-tryptophan biosynthesis; L-tryptophan from chorismate: step 2/5. Its function is as follows. Catalyzes the transfer of the phosphoribosyl group of 5-phosphorylribose-1-pyrophosphate (PRPP) to anthranilate to yield N-(5'-phosphoribosyl)-anthranilate (PRA). The chain is Anthranilate phosphoribosyltransferase from Chlorobaculum parvum (strain DSM 263 / NCIMB 8327) (Chlorobium vibrioforme subsp. thiosulfatophilum).